A 261-amino-acid polypeptide reads, in one-letter code: MYTDTGLAVRVIPCLDIDAGRVVKGVNFENLRDAGDPVELAAAYDAEGADELTFLDVTASSSGRATMLEVVRHTAEQVFIPLTVGGGVRTVADVDLLLRAGADKVSVNTAAIARPDLLADMATQFGSQCIVLSVDARKVPVGSSPTPSGWEVTTHGGRRGTGIDAVEWAARGADLGVGEILLNSMDADGTKAGFDLAMLRAVRAAVTVPVIASGGAGNVDHFAPAVAAGADAVLAASVFHFRELTIGQVKAAMAAEGNTVR.

Catalysis depends on residues aspartate 16 and aspartate 135.

Belongs to the HisA/HisF family. As to quaternary structure, heterodimer of HisH and HisF.

The protein resides in the cytoplasm. It carries out the reaction 5-[(5-phospho-1-deoxy-D-ribulos-1-ylimino)methylamino]-1-(5-phospho-beta-D-ribosyl)imidazole-4-carboxamide + L-glutamine = D-erythro-1-(imidazol-4-yl)glycerol 3-phosphate + 5-amino-1-(5-phospho-beta-D-ribosyl)imidazole-4-carboxamide + L-glutamate + H(+). It participates in amino-acid biosynthesis; L-histidine biosynthesis; L-histidine from 5-phospho-alpha-D-ribose 1-diphosphate: step 5/9. IGPS catalyzes the conversion of PRFAR and glutamine to IGP, AICAR and glutamate. The HisF subunit catalyzes the cyclization activity that produces IGP and AICAR from PRFAR using the ammonia provided by the HisH subunit. The protein is Imidazole glycerol phosphate synthase subunit HisF of Mycobacterium ulcerans (strain Agy99).